The primary structure comprises 354 residues: E2F transcription factor-like E2FF (354 aa).

The DNA-binding element occupies 21 to 86 (RKEKSLGVLV…RGKNQYSWKG (66 aa)). The interval 104–143 (ERLGYSSSNNSDKVSNGCEREEPLTLTPDDQENSSSSKMD) is disordered. A compositionally biased stretch (polar residues) spans 108-117 (YSSSNNSDKV). Residues 145–225 (KKEKSLWLLA…TRKPAYRWLG (81 aa)) mediate DNA binding.

The protein belongs to the E2F/DP family. High expression in young cotyledons and leaves, hypocotyls, shoot apical meristem, roots and mature pollen grains, moderate in developing trichomes, flowers and at early stages of developing anthers, and barely detectable in mature leaves. Not detected in primary root meristem, emerging lateral roots, pistils, developing embryos and siliques.

It localises to the nucleus. Its subcellular location is the cytoplasm. Inhibitor of E2F-dependent activation of gene expression. Binds specifically the E2 recognition site without interacting with DP proteins and prevents transcription activation by E2F/DP heterodimers. Does not bind retinoblastoma-related proteins. Acts as a growth regulator but is not associated with changes in the expression of cell cycle marker genes or in nuclear ploidy levels. Has no effect on cell proliferation, but may repress cell wall biosynthesis genes during cell elongation in differentiated cells. This chain is E2F transcription factor-like E2FF (E2FF), found in Arabidopsis thaliana (Mouse-ear cress).